Here is a 253-residue protein sequence, read N- to C-terminus: 5'-nucleotidase SurE (253 aa).

A divalent metal cation is bound by residues aspartate 8, aspartate 9, serine 40, and asparagine 93.

This sequence belongs to the SurE nucleotidase family. A divalent metal cation is required as a cofactor.

It is found in the cytoplasm. It carries out the reaction a ribonucleoside 5'-phosphate + H2O = a ribonucleoside + phosphate. Nucleotidase that shows phosphatase activity on nucleoside 5'-monophosphates. This Methylobacterium nodulans (strain LMG 21967 / CNCM I-2342 / ORS 2060) protein is 5'-nucleotidase SurE.